Reading from the N-terminus, the 999-residue chain is uncharacterized protein (999 aa).

Positions 45–128 are enriched in low complexity; that stretch reads NSNNIGNGNG…TPTITPSSPS (84 aa). Residues 45–129 form a disordered region; that stretch reads NSNNIGNGNG…PTITPSSPSV (85 aa). The stretch at 723–767 forms a coiled coil; the sequence is YQQSQQQQSQQQQQQQQQQQQQQQQQQQQQQQQQQQQQQQQQQQQ. A compositionally biased stretch (low complexity) spans 873-887; it reads NDINNANNSNNNNNN. Residues 873–904 form a disordered region; it reads NDINNANNSNNNNNNQSQVLLSPNRNKDGTLN. Residues 976 to 996 traverse the membrane as a helical segment; it reads LFSLVLILAFIWFFFEIYFFF.

The protein localises to the membrane. This is an uncharacterized protein from Dictyostelium discoideum (Social amoeba).